A 233-amino-acid chain; its full sequence is Octanoyltransferase (233 aa).

The BPL/LPL catalytic domain occupies 36-211 (DTTPDEIWLV…EFTRQLGYPT (176 aa)). Residues 75-82 (RGGQVTYH), 142-144 (SLG), and 155-157 (GLA) each bind substrate. Residue C173 is the Acyl-thioester intermediate of the active site.

This sequence belongs to the LipB family.

The protein localises to the cytoplasm. The catalysed reaction is octanoyl-[ACP] + L-lysyl-[protein] = N(6)-octanoyl-L-lysyl-[protein] + holo-[ACP] + H(+). Its pathway is protein modification; protein lipoylation via endogenous pathway; protein N(6)-(lipoyl)lysine from octanoyl-[acyl-carrier-protein]: step 1/2. Functionally, catalyzes the transfer of endogenously produced octanoic acid from octanoyl-acyl-carrier-protein onto the lipoyl domains of lipoate-dependent enzymes. Lipoyl-ACP can also act as a substrate although octanoyl-ACP is likely to be the physiological substrate. In Yersinia pseudotuberculosis serotype O:3 (strain YPIII), this protein is Octanoyltransferase.